The chain runs to 296 residues: Phosphoribosylaminoimidazole-succinocarboxamide synthase (296 aa).

This sequence belongs to the SAICAR synthetase family.

The catalysed reaction is 5-amino-1-(5-phospho-D-ribosyl)imidazole-4-carboxylate + L-aspartate + ATP = (2S)-2-[5-amino-1-(5-phospho-beta-D-ribosyl)imidazole-4-carboxamido]succinate + ADP + phosphate + 2 H(+). It functions in the pathway purine metabolism; IMP biosynthesis via de novo pathway; 5-amino-1-(5-phospho-D-ribosyl)imidazole-4-carboxamide from 5-amino-1-(5-phospho-D-ribosyl)imidazole-4-carboxylate: step 1/2. In Geobacter sulfurreducens (strain ATCC 51573 / DSM 12127 / PCA), this protein is Phosphoribosylaminoimidazole-succinocarboxamide synthase.